Consider the following 3996-residue polypeptide: Probable E3 ubiquitin-protein ligase HECTD4 (3996 aa).

A helical membrane pass occupies residues 282-302 (TCIIRCILVVFQVVFKFFFSP). Residues 1494–1510 (PTASEPDTTLTKTSPKN) show a composition bias toward polar residues. 2 disordered regions span residues 1494 to 1524 (PTAS…ESEA) and 1616 to 1637 (PETV…SICR). The residue at position 2080 (threonine 2080) is a Phosphothreonine. 4 disordered regions span residues 2219 to 2245 (FITS…DDIP), 2859 to 2919 (TSAT…PTVL), 3017 to 3053 (EDTK…STSS), and 3327 to 3403 (FDKS…QEVP). A compositionally biased stretch (acidic residues) spans 2232–2245 (ADDESDDDDDDDIP). The segment covering 2866–2887 (LSDSSSSSSSSPGQTPQSPSLL) has biased composition (low complexity). Basic residues predominate over residues 2888-2897 (SKRKKVKMKR). Composition is skewed to basic and acidic residues over residues 3017-3037 (EDTK…EPEK), 3327-3341 (FDKS…EQHP), and 3370-3403 (LSEK…QEVP). Residues 3627–3996 (SGGDPTYAFN…IHYREDPLSG (370 aa)) form the HECT domain. Cysteine 3964 acts as the Glycyl thioester intermediate in catalysis.

It localises to the membrane. The catalysed reaction is S-ubiquitinyl-[E2 ubiquitin-conjugating enzyme]-L-cysteine + [acceptor protein]-L-lysine = [E2 ubiquitin-conjugating enzyme]-L-cysteine + N(6)-ubiquitinyl-[acceptor protein]-L-lysine.. The protein operates within protein modification; protein ubiquitination. In terms of biological role, E3 ubiquitin-protein ligase which accepts ubiquitin from an E2 ubiquitin-conjugating enzyme in the form of a thioester and then directly transfers the ubiquitin to targeted substrates. This Homo sapiens (Human) protein is Probable E3 ubiquitin-protein ligase HECTD4 (HECTD4).